The sequence spans 177 residues: MSRVAKAPVVIPAGVEVKLNGQVITIKGKNGELTRTIHNAVEIQHADNQLTFAPRDGYADAWAQAGTTRSLLNAMVVGVTEGFTKKLQLVGVGYRASVKGNTVNLSVGYSHPVEHQLPAGITAECPTQTEILLKGADKQVIGQVAAELRAYRRPEPYKGKGIRYADEVVRIKEAKKK.

It belongs to the universal ribosomal protein uL6 family. Part of the 50S ribosomal subunit.

In terms of biological role, this protein binds to the 23S rRNA, and is important in its secondary structure. It is located near the subunit interface in the base of the L7/L12 stalk, and near the tRNA binding site of the peptidyltransferase center. This chain is Large ribosomal subunit protein uL6, found in Proteus mirabilis (strain HI4320).